Consider the following 1563-residue polypeptide: Ribulose bisphosphate carboxylase (1563 aa).

Substrate contacts are provided by H32 and S79. Positions 197 to 217 are cleaved as a propeptide — linker; that stretch reads LAAAFVGASTTRKASSVARRA. Substrate is bound at residue N328. Catalysis depends on K383, which acts as the Proton acceptor. Residue K385 participates in substrate binding. The Mg(2+) site is built by K408, D410, and E411. At K408 the chain carries N6-carboxylysine. H504 functions as the Proton acceptor in the catalytic mechanism. Residues R505, H538, and S585 each contribute to the substrate site. A propeptide spans 703-723 (linker); that stretch reads LAAAFVGASTTRKASSVARRA. Residue N834 coordinates substrate. K889 serves as the catalytic Proton acceptor. K891 serves as a coordination point for substrate. K914, D916, and E917 together coordinate Mg(2+). The residue at position 914 (K914) is an N6-carboxylysine. The Proton acceptor role is filled by H1010. R1011, H1044, and S1091 together coordinate substrate. The propeptide at 1209–1229 is linker; that stretch reads LAAAFVGASTTRKASSVARRA. Residue N1340 participates in substrate binding. The active-site Proton acceptor is K1395. Substrate is bound at residue K1397. The Mg(2+) site is built by K1420, D1422, and E1423. K1420 is modified (N6-carboxylysine). The active-site Proton acceptor is the H1516. Positions 1517 and 1550 each coordinate substrate.

Belongs to the RuBisCO large chain family. Type II subfamily. As to quaternary structure, homodimer. Mg(2+) is required as a cofactor. In Western blots an approximately 220 kDa polyprotein and 2 smaller proteins of about 55 and 52 kDa are detected, suggesting the polyprotein may be cleaved at one end of the linker and then at the other end to give mature RuBisCO.

It is found in the plastid. The protein resides in the chloroplast. It catalyses the reaction 2 (2R)-3-phosphoglycerate + 2 H(+) = D-ribulose 1,5-bisphosphate + CO2 + H2O. The catalysed reaction is D-ribulose 1,5-bisphosphate + O2 = 2-phosphoglycolate + (2R)-3-phosphoglycerate + 2 H(+). RuBisCO catalyzes two reactions: the carboxylation of D-ribulose 1,5-bisphosphate, the primary event in carbon dioxide fixation, as well as the oxidative fragmentation of the pentose substrate. Both reactions occur simultaneously and in competition at the same active site. The protein is Ribulose bisphosphate carboxylase (rbcL) of Prorocentrum minimum (Dinoflagellate).